The sequence spans 81 residues: Sulfur carrier protein TusA (81 aa).

Catalysis depends on C19, which acts as the Cysteine persulfide intermediate.

This sequence belongs to the sulfur carrier protein TusA family.

It localises to the cytoplasm. Functionally, sulfur carrier protein which probably makes part of a sulfur-relay system. The polypeptide is Sulfur carrier protein TusA (Aeromonas salmonicida (strain A449)).